Here is a 479-residue protein sequence, read N- to C-terminus: Ribulose bisphosphate carboxylase large chain (479 aa).

A propeptide spanning residues Met-1–Ser-2 is cleaved from the precursor. N-acetylproline is present on Pro-3. An N6,N6,N6-trimethyllysine modification is found at Lys-14. Asn-123 and Thr-173 together coordinate substrate. Residue Lys-175 is the Proton acceptor of the active site. Lys-177 lines the substrate pocket. Positions 201, 203, and 204 each coordinate Mg(2+). Lys-201 is modified (N6-carboxylysine). The active-site Proton acceptor is the His-294. Arg-295, His-327, and Ser-379 together coordinate substrate.

It belongs to the RuBisCO large chain family. Type I subfamily. Heterohexadecamer of 8 large chains and 8 small chains. Mg(2+) is required as a cofactor.

It is found in the plastid. The protein resides in the chloroplast. The catalysed reaction is 2 (2R)-3-phosphoglycerate + 2 H(+) = D-ribulose 1,5-bisphosphate + CO2 + H2O. The enzyme catalyses D-ribulose 1,5-bisphosphate + O2 = 2-phosphoglycolate + (2R)-3-phosphoglycerate + 2 H(+). In terms of biological role, ruBisCO catalyzes two reactions: the carboxylation of D-ribulose 1,5-bisphosphate, the primary event in carbon dioxide fixation, as well as the oxidative fragmentation of the pentose substrate in the photorespiration process. Both reactions occur simultaneously and in competition at the same active site. This is Ribulose bisphosphate carboxylase large chain from Jasminum nudiflorum (Winter jasmine).